A 51-amino-acid chain; its full sequence is Large ribosomal subunit protein eL39 (51 aa).

It belongs to the eukaryotic ribosomal protein eL39 family. As to quaternary structure, interacts with impact.

The protein is Large ribosomal subunit protein eL39 (rpl39) of Ictalurus punctatus (Channel catfish).